The sequence spans 798 residues: Probable G-protein coupled receptor 156 (798 aa).

At 1–49 the chain is on the extracellular side; it reads MEPEINCSEFCDSFPGQELDRRPLHDLCKTTITESQHSSTAASPLSPAL. Residue asparagine 6 is glycosylated (N-linked (GlcNAc...) asparagine). The helical transmembrane segment at 50–70 threads the bilayer; sequence LGIMWTFLSCGLLLVLFFLAF. The Cytoplasmic portion of the chain corresponds to 71-86; the sequence is TIRCRKNRIVKMSSPN. Residues 87–107 form a helical membrane-spanning segment; sequence LNVVTLLGSCLTYISAYLFGI. The Extracellular segment spans residues 108–118; sequence QDALEGSSVEA. The chain crosses the membrane as a helical span at residues 119 to 139; it reads LIQTRLSLLCIGTSLVFGPIL. At 140–164 the chain is on the cytoplasmic side; it reads GKSWRLYKVFTQRVPDKRVIIKDLQ. The helical transmembrane segment at 165–185 threads the bilayer; the sequence is LLGLVAALVVADVILLVTWVL. The Extracellular segment spans residues 186–222; sequence TDPIQCLQMLGVSMKVTGRDVSCSLTNTHFCASRYSD. The chain crosses the membrane as a helical span at residues 223–243; it reads VWIALVLGCKGLLLLYGAYLA. Residues 244–257 are Cytoplasmic-facing; the sequence is GLTNHVSSPPVNQS. Residues 258–278 form a helical membrane-spanning segment; sequence LTIMVGVNLLLLTAGLLFVVT. At 279-288 the chain is on the extracellular side; the sequence is RYLHSWPNLV. The helical transmembrane segment at 289 to 309 threads the bilayer; that stretch reads FGLTSGGIFVCTTTVNCCVFI. At 310 to 798 the chain is on the cytoplasmic side; sequence PQLKQWKAFE…FKDDLKPTLV (489 aa). Residues 353–390 adopt a coiled-coil conformation; the sequence is DEKSCMERLLTEKNAVIESLQEQVSNAKEKLVKLMSAE. 3 disordered regions span residues 441 to 497, 546 to 666, and 693 to 715; these read HVQG…PMAP, SEAP…KQCE, and PAAPCLPSSPALPRQRQPRPRLS. The segment covering 479–492 has biased composition (basic and acidic residues); sequence PKAEQSEGPERGDQ. Residues 559–572 are compositionally biased toward polar residues; it reads LWKSTTSRSPQKLS. Residues 583 to 594 show a composition bias toward basic residues; the sequence is VRRRRAAQRARS. Positions 606 to 624 are enriched in polar residues; sequence HQANSTVSSSQSGLIVQNR. A compositionally biased stretch (low complexity) spans 639–648; the sequence is PRSSSVKPSP.

It belongs to the G-protein coupled receptor 3 family. GABA-B receptor subfamily. In terms of tissue distribution, expressed in the outer and inner hair cells of the organ of Corti (at protein level). Expressed in the utricle and saccule within the vestibule (at protein level).

The protein resides in the cell membrane. The protein localises to the postsynaptic cell membrane. Orphan G-protein coupled receptor involved in the regulation of hair cell orientation in mechanosensory organs of the inner ear. It is required to trigger a 180 degree reversal in hair cell orientation, creating a virtual line of polarity reversal (LPR) across which stereociliary bundles are arranged in opposite orientations. In Mus musculus (Mouse), this protein is Probable G-protein coupled receptor 156 (Gpr156).